Reading from the N-terminus, the 456-residue chain is Bifunctional protein GlmU (456 aa).

Residues 1-229 (MSNRPMSVVI…TTETDGVNNR (229 aa)) are pyrophosphorylase. UDP-N-acetyl-alpha-D-glucosamine is bound by residues 11–14 (LAAG), lysine 25, glutamine 76, 81–82 (GT), 103–105 (YGD), glycine 140, glutamate 154, asparagine 169, and asparagine 227. Aspartate 105 lines the Mg(2+) pocket. A Mg(2+)-binding site is contributed by asparagine 227. The interval 230–250 (LQLATLERVYQAEQAEKLLLS) is linker. The N-acetyltransferase stretch occupies residues 251–456 (GVMLQDPARF…ASWQRPQKKK (206 aa)). 2 residues coordinate UDP-N-acetyl-alpha-D-glucosamine: arginine 333 and lysine 351. The active-site Proton acceptor is histidine 363. Residues tyrosine 366 and asparagine 377 each contribute to the UDP-N-acetyl-alpha-D-glucosamine site. Acetyl-CoA contacts are provided by residues alanine 380, 386–387 (NY), serine 405, alanine 423, and arginine 440.

The protein in the N-terminal section; belongs to the N-acetylglucosamine-1-phosphate uridyltransferase family. This sequence in the C-terminal section; belongs to the transferase hexapeptide repeat family. Homotrimer. The cofactor is Mg(2+).

It localises to the cytoplasm. The catalysed reaction is alpha-D-glucosamine 1-phosphate + acetyl-CoA = N-acetyl-alpha-D-glucosamine 1-phosphate + CoA + H(+). It carries out the reaction N-acetyl-alpha-D-glucosamine 1-phosphate + UTP + H(+) = UDP-N-acetyl-alpha-D-glucosamine + diphosphate. Its pathway is nucleotide-sugar biosynthesis; UDP-N-acetyl-alpha-D-glucosamine biosynthesis; N-acetyl-alpha-D-glucosamine 1-phosphate from alpha-D-glucosamine 6-phosphate (route II): step 2/2. The protein operates within nucleotide-sugar biosynthesis; UDP-N-acetyl-alpha-D-glucosamine biosynthesis; UDP-N-acetyl-alpha-D-glucosamine from N-acetyl-alpha-D-glucosamine 1-phosphate: step 1/1. It functions in the pathway bacterial outer membrane biogenesis; LPS lipid A biosynthesis. In terms of biological role, catalyzes the last two sequential reactions in the de novo biosynthetic pathway for UDP-N-acetylglucosamine (UDP-GlcNAc). The C-terminal domain catalyzes the transfer of acetyl group from acetyl coenzyme A to glucosamine-1-phosphate (GlcN-1-P) to produce N-acetylglucosamine-1-phosphate (GlcNAc-1-P), which is converted into UDP-GlcNAc by the transfer of uridine 5-monophosphate (from uridine 5-triphosphate), a reaction catalyzed by the N-terminal domain. This is Bifunctional protein GlmU from Erwinia tasmaniensis (strain DSM 17950 / CFBP 7177 / CIP 109463 / NCPPB 4357 / Et1/99).